The chain runs to 490 residues: Bifunctional protein HldE (490 aa).

Residues 1-330 form a ribokinase region; that stretch reads MERKNVESLF…GSMGFQHSDS (330 aa). 205-208 is a binding site for ATP; the sequence is NRKE. The active site involves aspartate 275. Residues 356–490 form a cytidylyltransferase region; that stretch reads FTNGCFDLLH…DKILRAYGEE (135 aa).

The protein in the N-terminal section; belongs to the carbohydrate kinase PfkB family. This sequence in the C-terminal section; belongs to the cytidylyltransferase family. Homodimer.

The catalysed reaction is D-glycero-beta-D-manno-heptose 7-phosphate + ATP = D-glycero-beta-D-manno-heptose 1,7-bisphosphate + ADP + H(+). The enzyme catalyses D-glycero-beta-D-manno-heptose 1-phosphate + ATP + H(+) = ADP-D-glycero-beta-D-manno-heptose + diphosphate. It functions in the pathway nucleotide-sugar biosynthesis; ADP-L-glycero-beta-D-manno-heptose biosynthesis; ADP-L-glycero-beta-D-manno-heptose from D-glycero-beta-D-manno-heptose 7-phosphate: step 1/4. The protein operates within nucleotide-sugar biosynthesis; ADP-L-glycero-beta-D-manno-heptose biosynthesis; ADP-L-glycero-beta-D-manno-heptose from D-glycero-beta-D-manno-heptose 7-phosphate: step 3/4. Catalyzes the phosphorylation of D-glycero-D-manno-heptose 7-phosphate at the C-1 position to selectively form D-glycero-beta-D-manno-heptose-1,7-bisphosphate. In terms of biological role, catalyzes the ADP transfer from ATP to D-glycero-beta-D-manno-heptose 1-phosphate, yielding ADP-D-glycero-beta-D-manno-heptose. The polypeptide is Bifunctional protein HldE (Geobacter metallireducens (strain ATCC 53774 / DSM 7210 / GS-15)).